Here is a 242-residue protein sequence, read N- to C-terminus: Probable pectate lyase D (242 aa).

The N-terminal stretch at 1 to 17 (MYQKSLLFSLLASSALA) is a signal peptide. Residue Asn-216 is glycosylated (N-linked (GlcNAc...) asparagine). Residues 217 to 242 (DTGAEPEEISEGPSDACQYSEPLSSC) are disordered.

It belongs to the polysaccharide lyase 3 family. Ca(2+) serves as cofactor.

The protein localises to the secreted. The enzyme catalyses Eliminative cleavage of (1-&gt;4)-alpha-D-galacturonan to give oligosaccharides with 4-deoxy-alpha-D-galact-4-enuronosyl groups at their non-reducing ends.. In terms of biological role, pectinolytic enzyme consist of four classes of enzymes: pectin lyase, polygalacturonase, pectin methylesterase and rhamnogalacturonase. Among pectinolytic enzymes, pectin lyase is the most important in depolymerization of pectin, since it cleaves internal glycosidic bonds of highly methylated pectins. Favors pectate, the anion, over pectin, the methyl ester. The protein is Probable pectate lyase D (plyD) of Aspergillus fumigatus (strain CBS 144.89 / FGSC A1163 / CEA10) (Neosartorya fumigata).